A 326-amino-acid polypeptide reads, in one-letter code: Vestitone reductase (326 aa).

NADP(+) contacts are provided by residues 12–18 (GGTGFLG), Arg37, and Tyr164.

Belongs to the NAD(P)-dependent epimerase/dehydratase family. Dihydroflavonol-4-reductase subfamily. As to quaternary structure, monomer. As to expression, detected in roots, and at lower levels in root nodules. Not detected in petioles, leaf and stem.

The catalysed reaction is a (3R,4R)-4,2'-dihydroxyisoflavan + NADP(+) = a (3R)-2'-hydroxyisoflavanone + NADPH + H(+). Inhibited by vestitone concentrations above 50 uM. Stereospecific enzyme that catalyzes the NADPH-dependent reduction of (3R)-vestitone to (3R,4R)-4'-methoxyisoflavan-2',4,7-triol (DMI). Has no activity with (3S)-vestitone. Catalyzes the penultimate step in the biosynthesis of the phytoalexin medicarpin, and thereby contributes to plant defense reactions. The sequence is that of Vestitone reductase from Medicago sativa (Alfalfa).